Consider the following 69-residue polypeptide: Cold shock protein CapB (69 aa).

The CSD domain occupies 7–66 (GTVKWFNDEKGFGFITPQSGDDLFVHFKAIQSDGFKSLKEGQQVSFIATRGQKGMQAEEV).

It is found in the cytoplasm. Its function is as follows. Affects cell viability at low temperatures. The polypeptide is Cold shock protein CapB (capB) (Pseudomonas fragi).